A 362-amino-acid polypeptide reads, in one-letter code: Heme A synthase (362 aa).

5 consecutive transmembrane segments (helical) span residues 10-30, 102-122, 128-148, 159-179, and 198-218; these read LAAI…MVLV, VIGM…AVSG, LWLI…MVAS, VRLA…VWTL, and AWGL…VAGL. Histidine 262 contacts heme. 3 helical membrane-spanning segments follow: residues 266–286, 297–317, and 318–338; these read AYTL…AGAG, LAAI…VVPI, and SLAL…VLQA. Histidine 323 is a binding site for heme.

Belongs to the COX15/CtaA family. Type 2 subfamily. As to quaternary structure, interacts with CtaB. Heme b serves as cofactor.

It localises to the cell membrane. It catalyses the reaction Fe(II)-heme o + 2 A + H2O = Fe(II)-heme a + 2 AH2. It functions in the pathway porphyrin-containing compound metabolism; heme A biosynthesis; heme A from heme O: step 1/1. In terms of biological role, catalyzes the conversion of heme O to heme A by two successive hydroxylations of the methyl group at C8. The first hydroxylation forms heme I, the second hydroxylation results in an unstable dihydroxymethyl group, which spontaneously dehydrates, resulting in the formyl group of heme A. This is Heme A synthase from Bradyrhizobium sp. (strain BTAi1 / ATCC BAA-1182).